Consider the following 106-residue polypeptide: Guanylate cyclase activator 2B (106 aa).

The signal sequence occupies residues 1 to 21; that stretch reads MSRSQLWAAVVLLLLLQSAQG. The propeptide occupies 22–91; it reads VYIKYHGFQV…STFKALRTIA (70 aa). Cystine bridges form between C62/C75, C95/C103, and C98/C106.

It belongs to the guanylin family. As to expression, localized predominantly in intestinal villi and the corticomedullary junction of the kidney.

It is found in the secreted. Its function is as follows. Endogenous activator of intestinal guanylate cyclase. It stimulates this enzyme through the same receptor binding region as the heat-stable enterotoxins. May be a potent physiological regulator of intestinal fluid and electrolyte transport. May be an autocrine/paracrine regulator of intestinal salt and water transport. The protein is Guanylate cyclase activator 2B (Guca2b) of Mus musculus (Mouse).